A 454-amino-acid chain; its full sequence is CBL-interacting protein kinase 33 (454 aa).

Residues 13 to 268 (YELGRTIGEG…IPEILEDEWF (256 aa)) enclose the Protein kinase domain. ATP is bound by residues 19-27 (IGEGTFAKV) and Lys-42. Asp-136 (proton acceptor) is an active-site residue. The interval 154 to 183 (DFGLSALSQQIKDDGLLHTTCGTPNYVAPE) is activation loop. An NAF domain is found at 305-329 (EEPEALNAFELISMSAGLNLGNLFD). Positions 335-364 (KRETRFTSKCPPKEIVRKIEEAAKPLGFDV) are PPI.

The protein belongs to the protein kinase superfamily. CAMK Ser/Thr protein kinase family. SNF1 subfamily. Mn(2+) serves as cofactor.

It catalyses the reaction L-seryl-[protein] + ATP = O-phospho-L-seryl-[protein] + ADP + H(+). The enzyme catalyses L-threonyl-[protein] + ATP = O-phospho-L-threonyl-[protein] + ADP + H(+). Functionally, CIPK serine-threonine protein kinases interact with CBL proteins. Binding of a CBL protein to the regulatory NAF domain of CIPK protein lead to the activation of the kinase in a calcium-dependent manner. The protein is CBL-interacting protein kinase 33 (CIPK33) of Oryza sativa subsp. japonica (Rice).